A 456-amino-acid chain; its full sequence is Bifunctional protein GlmU (456 aa).

Residues 1–229 (MSNRPMSVVI…TTETDGVNNR (229 aa)) form a pyrophosphorylase region. Residues 11-14 (LAAG), lysine 25, glutamine 76, 81-82 (GT), 103-105 (YGD), glycine 140, glutamate 154, asparagine 169, and asparagine 227 each bind UDP-N-acetyl-alpha-D-glucosamine. Aspartate 105 lines the Mg(2+) pocket. Asparagine 227 lines the Mg(2+) pocket. The segment at 230-250 (LQLATLERVYQAEQAEKLLLS) is linker. The N-acetyltransferase stretch occupies residues 251-456 (GVMLQDPARF…ASWQRPQKKK (206 aa)). Positions 333 and 351 each coordinate UDP-N-acetyl-alpha-D-glucosamine. Histidine 363 serves as the catalytic Proton acceptor. UDP-N-acetyl-alpha-D-glucosamine-binding residues include tyrosine 366 and asparagine 377. Acetyl-CoA-binding positions include alanine 380, 386-387 (NY), serine 405, alanine 423, and arginine 440.

This sequence in the N-terminal section; belongs to the N-acetylglucosamine-1-phosphate uridyltransferase family. It in the C-terminal section; belongs to the transferase hexapeptide repeat family. In terms of assembly, homotrimer. Requires Mg(2+) as cofactor.

The protein resides in the cytoplasm. It catalyses the reaction alpha-D-glucosamine 1-phosphate + acetyl-CoA = N-acetyl-alpha-D-glucosamine 1-phosphate + CoA + H(+). It carries out the reaction N-acetyl-alpha-D-glucosamine 1-phosphate + UTP + H(+) = UDP-N-acetyl-alpha-D-glucosamine + diphosphate. It functions in the pathway nucleotide-sugar biosynthesis; UDP-N-acetyl-alpha-D-glucosamine biosynthesis; N-acetyl-alpha-D-glucosamine 1-phosphate from alpha-D-glucosamine 6-phosphate (route II): step 2/2. Its pathway is nucleotide-sugar biosynthesis; UDP-N-acetyl-alpha-D-glucosamine biosynthesis; UDP-N-acetyl-alpha-D-glucosamine from N-acetyl-alpha-D-glucosamine 1-phosphate: step 1/1. It participates in bacterial outer membrane biogenesis; LPS lipid A biosynthesis. Its function is as follows. Catalyzes the last two sequential reactions in the de novo biosynthetic pathway for UDP-N-acetylglucosamine (UDP-GlcNAc). The C-terminal domain catalyzes the transfer of acetyl group from acetyl coenzyme A to glucosamine-1-phosphate (GlcN-1-P) to produce N-acetylglucosamine-1-phosphate (GlcNAc-1-P), which is converted into UDP-GlcNAc by the transfer of uridine 5-monophosphate (from uridine 5-triphosphate), a reaction catalyzed by the N-terminal domain. This chain is Bifunctional protein GlmU, found in Erwinia tasmaniensis (strain DSM 17950 / CFBP 7177 / CIP 109463 / NCPPB 4357 / Et1/99).